The chain runs to 128 residues: Holo-[acyl-carrier-protein] synthase (128 aa).

Mg(2+) contacts are provided by aspartate 8 and glutamate 58.

Belongs to the P-Pant transferase superfamily. AcpS family. It depends on Mg(2+) as a cofactor.

It is found in the cytoplasm. The enzyme catalyses apo-[ACP] + CoA = holo-[ACP] + adenosine 3',5'-bisphosphate + H(+). Functionally, transfers the 4'-phosphopantetheine moiety from coenzyme A to a Ser of acyl-carrier-protein. The polypeptide is Holo-[acyl-carrier-protein] synthase (Exiguobacterium sibiricum (strain DSM 17290 / CCUG 55495 / CIP 109462 / JCM 13490 / 255-15)).